We begin with the raw amino-acid sequence, 93 residues long: Cobalt transport protein CbiN (93 aa).

2 helical membrane-spanning segments follow: residues 5 to 25 (LMLL…NHGG) and 63 to 83 (LLFT…LGYC).

It belongs to the CbiN family. In terms of assembly, forms an energy-coupling factor (ECF) transporter complex composed of an ATP-binding protein (A component, CbiO), a transmembrane protein (T component, CbiQ) and 2 possible substrate-capture proteins (S components, CbiM and CbiN) of unknown stoichimetry.

It is found in the cell inner membrane. It functions in the pathway cofactor biosynthesis; adenosylcobalamin biosynthesis. Functionally, part of the energy-coupling factor (ECF) transporter complex CbiMNOQ involved in cobalt import. This Salmonella paratyphi B (strain ATCC BAA-1250 / SPB7) protein is Cobalt transport protein CbiN.